Consider the following 571-residue polypeptide: Urease subunit alpha (571 aa).

A Urease domain is found at 133 to 571; sequence GGIDTHIHFI…LPLAQRYFLF (439 aa). Residues His138, His140, and Lys221 each coordinate Ni(2+). Lys221 bears the N6-carboxylysine mark. His223 serves as a coordination point for substrate. Residues His250 and His276 each coordinate Ni(2+). His324 acts as the Proton donor in catalysis. Asp364 serves as a coordination point for Ni(2+).

This sequence belongs to the metallo-dependent hydrolases superfamily. Urease alpha subunit family. In terms of assembly, heterotrimer of UreA (gamma), UreB (beta) and UreC (alpha) subunits. Three heterotrimers associate to form the active enzyme. Ni cation is required as a cofactor. In terms of processing, carboxylation allows a single lysine to coordinate two nickel ions.

It is found in the cytoplasm. It carries out the reaction urea + 2 H2O + H(+) = hydrogencarbonate + 2 NH4(+). It functions in the pathway nitrogen metabolism; urea degradation; CO(2) and NH(3) from urea (urease route): step 1/1. The polypeptide is Urease subunit alpha (Corynebacterium efficiens (strain DSM 44549 / YS-314 / AJ 12310 / JCM 11189 / NBRC 100395)).